Consider the following 47-residue polypeptide: Small, acid-soluble spore protein N (47 aa).

Polar residues-rich tracts occupy residues 1 to 11 (MGNPKSNQQPF) and 29 to 47 (KQMQ…TKGE). Positions 1–47 (MGNPKSNQQPFVPQHIGTKPREAGGNKGKQMQDQSGQHPQVIQTKGE) are disordered.

It belongs to the SspN family.

The protein localises to the spore core. The protein is Small, acid-soluble spore protein N of Anoxybacillus flavithermus (strain DSM 21510 / WK1).